A 90-amino-acid chain; its full sequence is Probable Fe(2+)-trafficking protein (90 aa).

This sequence belongs to the Fe(2+)-trafficking protein family.

In terms of biological role, could be a mediator in iron transactions between iron acquisition and iron-requiring processes, such as synthesis and/or repair of Fe-S clusters in biosynthetic enzymes. The sequence is that of Probable Fe(2+)-trafficking protein from Haemophilus influenzae (strain 86-028NP).